Consider the following 435-residue polypeptide: E3 ubiquitin-protein ligase RNFT1 (435 aa).

A disordered region spans residues 1 to 62 (MPLFLLSLPT…SSEDASTPQC (62 aa)). Residues 16–34 (GHERRQRPEAKTSGSEKKY) show a composition bias toward basic and acidic residues. A compositionally biased stretch (polar residues) spans 40-62 (ANRSQLHSPPGTGSSEDASTPQC). 6 helical membrane-spanning segments follow: residues 158–178 (ILILSVKLVMQHITGISLGIG), 203–223 (IQCAWLLVFLAGSSVLLYYTF), 233–253 (IFLNPTLDHLSFWEVFWIVGI), 256–276 (FILKFFFMGLKCLILLVPSFI), 298–318 (TFVPIPVWFRYLISYGEFGNV), and 323–343 (LGILLALLYLILKLLEFFGHL). The tract at residues 368 to 419 (CSDVDDICSICQAEFQKPILLICQHIFCEECMTLWFNREKTCPLCRTVISDH) is required for ubiquitin ligase activity and for protection against ER stress-induced cell death. The RING-type zinc finger occupies 375–413 (CSICQAEFQKPILLICQHIFCEECMTLWFNREKTCPLCR).

Expressed at highest levels in testis, lower levels in heart, liver, lung, and kidney. Not detected in brain, ovary, and uterus. Down-regulated in testis from patients with maturation arrest (MA) or Sertoli cell-only syndrome (SCOS). Ubiquitously expressed with high expression in testis.

Its subcellular location is the endoplasmic reticulum membrane. It catalyses the reaction S-ubiquitinyl-[E2 ubiquitin-conjugating enzyme]-L-cysteine + [acceptor protein]-L-lysine = [E2 ubiquitin-conjugating enzyme]-L-cysteine + N(6)-ubiquitinyl-[acceptor protein]-L-lysine.. Its pathway is protein modification; protein ubiquitination. Functionally, E3 ubiquitin-protein ligase that acts in the endoplasmic reticulum (ER)-associated degradation (ERAD) pathway, which targets misfolded proteins that accumulate in the endoplasmic reticulum (ER) for ubiquitination and subsequent proteasome-mediated degradation. Protects cells from ER stress-induced apoptosis. This Homo sapiens (Human) protein is E3 ubiquitin-protein ligase RNFT1 (RNFT1).